Consider the following 207-residue polypeptide: High frequency lysogenization protein HflD homolog (207 aa).

This sequence belongs to the HflD family.

Its subcellular location is the cytoplasm. It localises to the cell inner membrane. The sequence is that of High frequency lysogenization protein HflD homolog from Teredinibacter turnerae (strain ATCC 39867 / T7901).